The sequence spans 327 residues: Putative hydroxymethylpyrimidine/phosphomethylpyrimidine kinase C18B5.05c (327 aa).

Position 54 (glutamine 54) interacts with 4-amino-5-hydroxymethyl-2-methylpyrimidine.

Belongs to the ThiD family.

Its subcellular location is the cytoplasm. It localises to the nucleus. It catalyses the reaction 4-amino-5-hydroxymethyl-2-methylpyrimidine + ATP = 4-amino-2-methyl-5-(phosphooxymethyl)pyrimidine + ADP + H(+). The enzyme catalyses 4-amino-2-methyl-5-(phosphooxymethyl)pyrimidine + ATP = 4-amino-2-methyl-5-(diphosphooxymethyl)pyrimidine + ADP. The protein operates within cofactor biosynthesis; thiamine diphosphate biosynthesis; 4-amino-2-methyl-5-diphosphomethylpyrimidine from 5-amino-1-(5-phospho-D-ribosyl)imidazole: step 2/3. Its pathway is cofactor biosynthesis; thiamine diphosphate biosynthesis; 4-amino-2-methyl-5-diphosphomethylpyrimidine from 5-amino-1-(5-phospho-D-ribosyl)imidazole: step 3/3. Catalyzes the phosphorylation of hydroxymethylpyrimidine phosphate (HMP-P) to HMP-PP, and of HMP to HMP-P. In Schizosaccharomyces pombe (strain 972 / ATCC 24843) (Fission yeast), this protein is Putative hydroxymethylpyrimidine/phosphomethylpyrimidine kinase C18B5.05c.